The following is a 279-amino-acid chain: Large ribosomal subunit protein uL2 (279 aa).

The segment at 224–279 (AMNAVDHPMGGGRGHSKGGNIPRSPWNQPSRGLKTRPKKSWDWMIVSDRRKNKAGK) is disordered.

It belongs to the universal ribosomal protein uL2 family. As to quaternary structure, part of the 50S ribosomal subunit. Forms a bridge to the 30S subunit in the 70S ribosome.

Functionally, one of the primary rRNA binding proteins. Required for association of the 30S and 50S subunits to form the 70S ribosome, for tRNA binding and peptide bond formation. It has been suggested to have peptidyltransferase activity; this is somewhat controversial. Makes several contacts with the 16S rRNA in the 70S ribosome. This chain is Large ribosomal subunit protein uL2, found in Elusimicrobium minutum (strain Pei191).